The sequence spans 1373 residues: DNA-directed RNA polymerase subunit beta'' (1373 aa).

Residues Cys-220, Cys-293, Cys-300, and Cys-303 each coordinate Zn(2+).

The protein belongs to the RNA polymerase beta' chain family. RpoC2 subfamily. In terms of assembly, in plastids the minimal PEP RNA polymerase catalytic core is composed of four subunits: alpha, beta, beta', and beta''. When a (nuclear-encoded) sigma factor is associated with the core the holoenzyme is formed, which can initiate transcription. The cofactor is Zn(2+).

The protein resides in the plastid. The protein localises to the chloroplast. The enzyme catalyses RNA(n) + a ribonucleoside 5'-triphosphate = RNA(n+1) + diphosphate. Its function is as follows. DNA-dependent RNA polymerase catalyzes the transcription of DNA into RNA using the four ribonucleoside triphosphates as substrates. This chain is DNA-directed RNA polymerase subunit beta'', found in Lepidium virginicum (Virginia pepperweed).